A 1081-amino-acid polypeptide reads, in one-letter code: Inversin (1081 aa).

ANK repeat units lie at residues 13 to 42 (SLAS…ALKD), 47 to 76 (FGRT…DVNK), 80 to 110 (SQRT…WMQK), 113 to 144 (EEMT…EVDT), 148 to 177 (NKQT…NIGI), 181 to 213 (EGKI…TESL), 220 to 250 (EGRT…NITS), 254 to 283 (LFRT…SGTI), 288 to 317 (QGAT…VKDD), 321 to 350 (EGRT…DIDI), 356 to 385 (YGGT…QVDA), 389 to 418 (MKHT…RVDL), 422 to 451 (DGHS…NPNV), 455 to 484 (AGRT…DPNI), 488 to 517 (EGRT…FPNQ), and 523 to 553 (ERYT…SIAA). The residue at position 75 (Asn75) is a 3-hydroxyasparagine. The D-box 1 motif lies at 490-498 (RTALHWSCN). Positions 555 to 584 (QDIAAFKIQAVYKGYKVRKAFRDRKNLLMK) constitute an IQ 1 domain. The span at 589–610 (RKDAAAKKREEENKRREAEQQK) shows a compositional bias: basic and acidic residues. The disordered stretch occupies residues 589 to 889 (RKDAAAKKRE…PAPGPLSGQS (301 aa)). A compositionally biased stretch (polar residues) spans 638-649 (RAPSKQPPSSEA). 3 stretches are compositionally biased toward basic and acidic residues: residues 688–698 (KPNESPREQCK), 724–740 (EKSR…DKGK), and 772–785 (DGHR…DTAS). Over residues 863–872 (SGTSTLSEDA) the composition is skewed to polar residues. The D-box 2 motif lies at 910 to 918 (RKELFRKKN). The IQ 2 domain occupies 917-946 (KNKAAAVIQRAWRSYQLRKHLSHLLHMKEL). Residues 1022–1050 (RTHSVLHLNSVSNLQCIHLLENSGRSKNF) form an ANK 17 repeat. Over residues 1051-1061 (SYNLQSATPPK) the composition is skewed to polar residues. The segment at 1051 to 1081 (SYNLQSATPPKTKTKLRPSLEEECVRGSWNS) is disordered.

Binds calmodulin via its IQ domains. Interacts with APC2. Interacts with alpha-, beta-, and gamma-catenin. Interacts with N-cadherin (CDH2). Interacts with NPHP1. Interacts with DVL1, PRICKLE (PRICKLE1 or PRICKLE2) and Strabismus (VANGL1 or VANGL2). Component of a complex containing at least ANKS6, INVS, NEK8 and NPHP3. ANKS6 may organize complex assembly by linking INVS and NPHP3 to NEK8 and INVS may target the complex to the proximal ciliary axoneme. Interacts with IQCB1; the interaction likely requires additional interactors. Interacts with microtubules. Post-translationally, may be ubiquitinated via its interaction with APC2. In terms of processing, hydroxylated at Asn-75, most probably by HIF1AN.

The protein resides in the cytoplasm. Its subcellular location is the cytoskeleton. It localises to the membrane. The protein localises to the spindle. It is found in the nucleus. In terms of biological role, required for normal renal development and establishment of left-right axis. Probably acts as a molecular switch between different Wnt signaling pathways. Inhibits the canonical Wnt pathway by targeting cytoplasmic disheveled (DVL1) for degradation by the ubiquitin-proteasome. This suggests that it is required in renal development to oppose the repression of terminal differentiation of tubular epithelial cells by Wnt signaling. Involved in the organization of apical junctions in kidney cells together with NPHP1, NPHP4 and RPGRIP1L/NPHP8. Does not seem to be strictly required for ciliogenesis. The sequence is that of Inversin (INVS) from Canis lupus familiaris (Dog).